We begin with the raw amino-acid sequence, 348 residues long: Nicotinate-nucleotide--dimethylbenzimidazole phosphoribosyltransferase (348 aa).

Glutamate 316 functions as the Proton acceptor in the catalytic mechanism.

Belongs to the CobT family.

It catalyses the reaction 5,6-dimethylbenzimidazole + nicotinate beta-D-ribonucleotide = alpha-ribazole 5'-phosphate + nicotinate + H(+). It participates in nucleoside biosynthesis; alpha-ribazole biosynthesis; alpha-ribazole from 5,6-dimethylbenzimidazole: step 1/2. In terms of biological role, catalyzes the synthesis of alpha-ribazole-5'-phosphate from nicotinate mononucleotide (NAMN) and 5,6-dimethylbenzimidazole (DMB). This is Nicotinate-nucleotide--dimethylbenzimidazole phosphoribosyltransferase from Xanthomonas campestris pv. campestris (strain 8004).